Here is a 622-residue protein sequence, read N- to C-terminus: Chromosomal replication initiator protein DnaA (622 aa).

The interval 1–99 is domain I, interacts with DnaA modulators; sequence MADVPADLAA…SAGEPPAPPA (99 aa). A disordered region spans residues 88–282; the sequence is DDSAGEPPAP…APGPGEPHAR (195 aa). The tract at residues 100 to 281 is domain II; that stretch reads PPMHQSHQGP…PAPGPGEPHA (182 aa). Basic and acidic residues-rich tracts occupy residues 118–137 and 176–210; these read QRDD…RPSD and GYQD…EPWR. The segment covering 250 to 262 has biased composition (gly residues); that stretch reads PGGHGPGRTGGSV. The interval 282-498 is domain III, AAA+ region; that stretch reads RLNPKYLFDT…GALIRVTAFA (217 aa). ATP contacts are provided by glycine 326, glycine 328, lysine 329, and threonine 330. Residues 499 to 622 form a domain IV, binds dsDNA region; it reads SLNRQPVDLG…TELTNRIKNG (124 aa).

This sequence belongs to the DnaA family. As to quaternary structure, oligomerizes as a right-handed, spiral filament on DNA at oriC.

The protein resides in the cytoplasm. Functionally, plays an essential role in the initiation and regulation of chromosomal replication. ATP-DnaA binds to the origin of replication (oriC) to initiate formation of the DNA replication initiation complex once per cell cycle. Binds the DnaA box (a 9 base pair repeat at the origin) and separates the double-stranded (ds)DNA. Forms a right-handed helical filament on oriC DNA; dsDNA binds to the exterior of the filament while single-stranded (ss)DNA is stabiized in the filament's interior. The ATP-DnaA-oriC complex binds and stabilizes one strand of the AT-rich DNA unwinding element (DUE), permitting loading of DNA polymerase. After initiation quickly degrades to an ADP-DnaA complex that is not apt for DNA replication. Binds acidic phospholipids. This is Chromosomal replication initiator protein DnaA from Streptomyces griseus subsp. griseus (strain JCM 4626 / CBS 651.72 / NBRC 13350 / KCC S-0626 / ISP 5235).